The following is a 194-amino-acid chain: Translation machinery-associated protein 22 (194 aa).

An SUI1 domain is found at 102–173 (VQIKRVERNK…DVQDWLLEVY (72 aa)).

It belongs to the DENR family. In terms of assembly, interacts with the 40S ribosomal subunit.

It localises to the cytoplasm. This chain is Translation machinery-associated protein 22 (tma22), found in Aspergillus oryzae (strain ATCC 42149 / RIB 40) (Yellow koji mold).